A 399-amino-acid polypeptide reads, in one-letter code: Odorant receptor 42b (399 aa).

The Cytoplasmic portion of the chain corresponds to 1–45; the sequence is MVFELIRPAPLTEQKRSRDGCIYLYRAMKFIGWLPPKQGVLRYVY. A helical membrane pass occupies residues 46 to 66; the sequence is LTWTLMTFVWCTTYLPLGFLG. The Extracellular segment spans residues 67-83; it reads SYMTQIKSFSPGEFLTS. The chain crosses the membrane as a helical span at residues 84 to 104; the sequence is LQVCINAYGSSVKVAITYSML. The Cytoplasmic segment spans residues 105–140; that stretch reads WRLIKAKNILDQLDLRCTAMEEREKIHLVVARSNHA. Residues 141–161 traverse the membrane as a helical segment; sequence FLIFTFVYCGYAGSTYLSSVL. At 162–178 the chain is on the extracellular side; it reads SGRPPWQLYNPFIDWHD. Residues 179–199 traverse the membrane as a helical segment; sequence GTLKLWVASTLEYMVMSGAVL. At 200 to 268 the chain is on the cytoplasmic side; it reads QDQLSDSYPL…AIIKPVIQGT (69 aa). The helical transmembrane segment at 269-289 threads the bilayer; sequence IFTQFLLIGLVLGFTLINVFF. Residues 290-292 lie on the Extracellular side of the membrane; the sequence is FSD. Residues 293-313 traverse the membrane as a helical segment; that stretch reads IWTGIASFMFVITILLQTFPF. Residues 314–356 are Cytoplasmic-facing; the sequence is CYTCNLIMEDCESLTHAIFQSNWVDASRRYKTTLLYFLQNVQQ. The chain crosses the membrane as a helical span at residues 357–377; sequence PIVFIAGGIFQISMSSNISVA. The Extracellular segment spans residues 378 to 399; that stretch reads KFAFSVITITKQMNIADKFKTD.

Belongs to the insect chemoreceptor superfamily. Heteromeric odorant receptor channel (TC 1.A.69) family. Or2a subfamily. As to quaternary structure, interacts with Orco. Complexes exist early in the endomembrane system in olfactory sensory neurons (OSNs), coupling these complexes to the conserved ciliary trafficking pathway. Expressed in olfactory sensory neurons in the antenna.

It localises to the cell membrane. Functionally, odorant receptor which mediates acceptance or avoidance behavior, depending on its substrates. The odorant receptor repertoire encodes a large collection of odor stimuli that vary widely in identity, intensity, and duration. May form a complex with Orco to form odorant-sensing units, providing sensitive and prolonged odorant signaling and calcium permeability. Involved in the behavioral responses to ethyl acetate and pentyl acetate. The protein is Odorant receptor 42b (Or42b) of Drosophila melanogaster (Fruit fly).